The sequence spans 202 residues: UPF0301 protein Meso_0753 (202 aa).

Belongs to the UPF0301 (AlgH) family.

This chain is UPF0301 protein Meso_0753, found in Chelativorans sp. (strain BNC1).